A 98-amino-acid polypeptide reads, in one-letter code: MSLIYMNVMMAFTMSLTGLLMYRSHLMSALLCMEGMMLSLFILAALTILNSHFTLANMAPIILLVFAACEAAIGLALLVMISNTYGTDYVQNLNLLQC.

The next 3 membrane-spanning stretches (helical) occupy residues 1–21 (MSLI…GLLM), 29–49 (ALLC…LTIL), and 61–81 (IILL…LVMI).

This sequence belongs to the complex I subunit 4L family. As to quaternary structure, core subunit of respiratory chain NADH dehydrogenase (Complex I) which is composed of 45 different subunits.

The protein resides in the mitochondrion inner membrane. The enzyme catalyses a ubiquinone + NADH + 5 H(+)(in) = a ubiquinol + NAD(+) + 4 H(+)(out). In terms of biological role, core subunit of the mitochondrial membrane respiratory chain NADH dehydrogenase (Complex I) which catalyzes electron transfer from NADH through the respiratory chain, using ubiquinone as an electron acceptor. Part of the enzyme membrane arm which is embedded in the lipid bilayer and involved in proton translocation. This Berardius bairdii (Baird's beaked whale) protein is NADH-ubiquinone oxidoreductase chain 4L (MT-ND4L).